We begin with the raw amino-acid sequence, 100 residues long: MIETLTNFFITSALVLFGIAFIIGLFRLIKGPTTADRVVAFDASSAVIMCIIGIVSVIYNTVSFLDSIMLVAIISFVSSVSISRFIGGGRVFNGTNKRNH.

Helical transmembrane passes span 6–26 (TNFFITSALVLFGIAFIIGLF), 38–58 (VVAFDASSAVIMCIIGIVSVI), and 62–82 (VSFLDSIMLVAIISFVSSVSI).

The protein belongs to the CPA3 antiporters (TC 2.A.63) subunit F family. May form a heterooligomeric complex that consists of seven subunits: mnhA2, mnhB2, mnhC2, mnhD2, mnhE2, mnhF2 and mnhG2.

It localises to the cell membrane. This Staphylococcus haemolyticus (strain JCSC1435) protein is Putative antiporter subunit mnhF2 (mnhF2).